Here is a 387-residue protein sequence, read N- to C-terminus: Putative transposase y4pF/y4sB (387 aa).

It belongs to the transposase 20 family.

The polypeptide is Putative transposase y4pF/y4sB (Sinorhizobium fredii (strain NBRC 101917 / NGR234)).